The following is a 631-amino-acid chain: MKTYVSNEYDVIVVGAGHAGCEAALASARMGEKTLLLTISLDMVAFMPCNPSVGGPAKGTVVREIDALGGEMGKNIDKTYIQMRMLNTGKGPAVRALRAQADKWDYHEEMKRTIENTPNLTLRQAVVDDLIVEDGECRGVVTNTGARYRAKSVVLTTGTAARGRIFIGELNYSSGPNNTIPAIKLSESLERLGFKLRRFKTGTPPRVNRHTIDYSKTEEEPGDKEPRHFSFTSRDEDYLTDQTSCWMTYTNPKTHEIINENLDRSPMFSGDIVGVGPRYCPSIETKVVRFADKDRHQIFLEPEGRKTEEIYVGDFSTSMPEEVQLEMLHTVAGLEKVEMMRPGYAIEYDVVDPWQLTHTLETKRIKHLYTAGQMNGTSGYEEAAGQGLIAGINAALSAEGKPAFTLGRDEAYIGVLIDDLVTKGTEEPYRLLTSRAEYRLLLRHDNADLRLTEKGHDLGLIDDDRYAEFLAKKELIQEDLDRLGEITVHPTIAVNEYLAGLGQTDLNGGVKADVFLRRPRVTVEDVERLTGQKLAGDRYVKEQVEIDIKYAGYIKKQEIQVARLRRQEAKKIPKDIDYDQIEGLATEAREKLAKIRPETLAQAERISGVNPADLAILSVYVQNGKYAKVQK.

Position 15–20 (15–20 (GAGHAG)) interacts with FAD. Residues 214–233 (YSKTEEEPGDKEPRHFSFTS) are disordered. 276–290 (GPRYCPSIETKVVRF) contacts NAD(+).

The protein belongs to the MnmG family. In terms of assembly, homodimer. Heterotetramer of two MnmE and two MnmG subunits. The cofactor is FAD.

The protein resides in the cytoplasm. Its function is as follows. NAD-binding protein involved in the addition of a carboxymethylaminomethyl (cmnm) group at the wobble position (U34) of certain tRNAs, forming tRNA-cmnm(5)s(2)U34. The protein is tRNA uridine 5-carboxymethylaminomethyl modification enzyme MnmG of Lactobacillus delbrueckii subsp. bulgaricus (strain ATCC BAA-365 / Lb-18).